A 349-amino-acid polypeptide reads, in one-letter code: Phosphoribosylformylglycinamidine cyclo-ligase (349 aa).

The protein belongs to the AIR synthase family.

The protein localises to the cytoplasm. It catalyses the reaction 2-formamido-N(1)-(5-O-phospho-beta-D-ribosyl)acetamidine + ATP = 5-amino-1-(5-phospho-beta-D-ribosyl)imidazole + ADP + phosphate + H(+). The protein operates within purine metabolism; IMP biosynthesis via de novo pathway; 5-amino-1-(5-phospho-D-ribosyl)imidazole from N(2)-formyl-N(1)-(5-phospho-D-ribosyl)glycinamide: step 2/2. The polypeptide is Phosphoribosylformylglycinamidine cyclo-ligase (Listeria monocytogenes serotype 4b (strain CLIP80459)).